Consider the following 259-residue polypeptide: Small ribosomal subunit protein eS1 (259 aa).

The protein belongs to the eukaryotic ribosomal protein eS1 family. As to quaternary structure, component of the small ribosomal subunit. Mature ribosomes consist of a small (40S) and a large (60S) subunit. The 40S subunit contains about 33 different proteins and 1 molecule of RNA (18S). The 60S subunit contains about 49 different proteins and 3 molecules of RNA (25S, 5.8S and 5S).

Its subcellular location is the cytoplasm. In Monosiga brevicollis (Choanoflagellate), this protein is Small ribosomal subunit protein eS1.